Here is a 210-residue protein sequence, read N- to C-terminus: Pyridoxine/pyridoxamine 5'-phosphate oxidase (210 aa).

Substrate is bound by residues 7-10 (REDY) and Lys65. Residues 60–65 (RVVLLK), 75–76 (FT), Arg81, Lys82, and Gln104 contribute to the FMN site. Tyr122, Arg126, and Ser130 together coordinate substrate. FMN contacts are provided by residues 139–140 (QS) and Trp183. 189 to 191 (RLH) is a substrate binding site. Arg193 lines the FMN pocket.

The protein belongs to the pyridoxamine 5'-phosphate oxidase family. Homodimer. FMN is required as a cofactor.

The catalysed reaction is pyridoxamine 5'-phosphate + O2 + H2O = pyridoxal 5'-phosphate + H2O2 + NH4(+). It carries out the reaction pyridoxine 5'-phosphate + O2 = pyridoxal 5'-phosphate + H2O2. The protein operates within cofactor metabolism; pyridoxal 5'-phosphate salvage; pyridoxal 5'-phosphate from pyridoxamine 5'-phosphate: step 1/1. Its pathway is cofactor metabolism; pyridoxal 5'-phosphate salvage; pyridoxal 5'-phosphate from pyridoxine 5'-phosphate: step 1/1. Its function is as follows. Catalyzes the oxidation of either pyridoxine 5'-phosphate (PNP) or pyridoxamine 5'-phosphate (PMP) into pyridoxal 5'-phosphate (PLP). This chain is Pyridoxine/pyridoxamine 5'-phosphate oxidase, found in Actinobacillus succinogenes (strain ATCC 55618 / DSM 22257 / CCUG 43843 / 130Z).